The following is a 301-amino-acid chain: MAALPSLRQLSYLVTLSETLHFTEAARRSFVTQSTLSGGIMELERLLGGVLVERDRQNVRLTPLGEQVVARARVLLADAQDLMRLSREMSEPLTGDLHLGIIPTIAPFILTQLLDEVHKQLPKIQLHLHEAQSEKIVERLEHGNLDMVVLALPFDTRGLKVADIAKENLYLVCNKHDKHSVNAHSLDDLDLSRLMLLEEGHCLRDHALSACPIGERKNDNRLKASSLPTLVEMVSSNLGFTLLPEIAINTHMLKFNDDLLVKEIENAPSRTLALITRKSTPLQSEFDVILDILKRITATLH.

Positions 5–62 constitute an HTH lysR-type domain; it reads PSLRQLSYLVTLSETLHFTEAARRSFVTQSTLSGGIMELERLLGGVLVERDRQNVRLT. Positions 22 to 41 form a DNA-binding region, H-T-H motif; it reads FTEAARRSFVTQSTLSGGIM.

This sequence belongs to the LysR transcriptional regulatory family.

Its function is as follows. Transcriptional regulator of the esterase operon. The sequence is that of HTH-type transcriptional regulator EstR (estR) from Acinetobacter baylyi (strain ATCC 33305 / BD413 / ADP1).